Consider the following 182-residue polypeptide: NADH-quinone oxidoreductase subunit B 2 (182 aa).

Residues Cys55, Cys56, Cys120, and Cys150 each coordinate [4Fe-4S] cluster.

Belongs to the complex I 20 kDa subunit family. As to quaternary structure, NDH-1 is composed of 14 different subunits. Subunits NuoB, C, D, E, F, and G constitute the peripheral sector of the complex. The cofactor is [4Fe-4S] cluster.

It is found in the cell inner membrane. The catalysed reaction is a quinone + NADH + 5 H(+)(in) = a quinol + NAD(+) + 4 H(+)(out). NDH-1 shuttles electrons from NADH, via FMN and iron-sulfur (Fe-S) centers, to quinones in the respiratory chain. The immediate electron acceptor for the enzyme in this species is believed to be ubiquinone. Couples the redox reaction to proton translocation (for every two electrons transferred, four hydrogen ions are translocated across the cytoplasmic membrane), and thus conserves the redox energy in a proton gradient. This is NADH-quinone oxidoreductase subunit B 2 from Sorangium cellulosum (strain So ce56) (Polyangium cellulosum (strain So ce56)).